The primary structure comprises 143 residues: Small ribosomal subunit protein uS11c (143 aa).

Belongs to the universal ribosomal protein uS11 family. Part of the 30S ribosomal subunit.

Its subcellular location is the plastid. The protein resides in the chloroplast. The chain is Small ribosomal subunit protein uS11c from Saccharum officinarum (Sugarcane).